The chain runs to 142 residues: Galectin-10 (142 aa).

S2 bears the N-acetylserine mark. A Galectin domain is found at 6–138 (VPYTEAASLS…DISLTKFNVS (133 aa)).

As to quaternary structure, interacts with CEL. Expressed abundantly in the bone marrow. Expressed exclusively by eosinophils and basophils. Not detected in monocytes and neutrophils. Expressed in CD25-positive regulatory T-cells (Treg) (at protein level). Found in intestinal tissue from patients with Celiac disease, expression is directly related to the histological grade of mucosal damage and to the number of eosinophils found in the duodenal lesion (at protein level). Found in sputum of patients with eosinophilic inflammatory diseases such as asthma (at protein level).

It localises to the cytoplasm. The protein localises to the cytosol. The protein resides in the cytoplasmic granule. In terms of biological role, regulates immune responses through the recognition of cell-surface glycans. Essential for the anergy and suppressive function of CD25-positive regulatory T-cells (Treg). The sequence is that of Galectin-10 (CLC) from Homo sapiens (Human).